The primary structure comprises 232 residues: Ribonuclease 3 (232 aa).

Residues Glu-5–Gly-134 form the RNase III domain. Glu-47 serves as a coordination point for Mg(2+). Asp-51 is an active-site residue. The Mg(2+) site is built by Asp-120 and Glu-123. Glu-123 is a catalytic residue. The region spanning Asp-160 to His-229 is the DRBM domain.

Belongs to the ribonuclease III family. As to quaternary structure, homodimer. It depends on Mg(2+) as a cofactor.

It localises to the cytoplasm. The enzyme catalyses Endonucleolytic cleavage to 5'-phosphomonoester.. Digests double-stranded RNA. Involved in the processing of primary rRNA transcript to yield the immediate precursors to the large and small rRNAs (23S and 16S). Processes some mRNAs, and tRNAs when they are encoded in the rRNA operon. Processes pre-crRNA and tracrRNA of type II CRISPR loci if present in the organism. The polypeptide is Ribonuclease 3 (Streptococcus gordonii (strain Challis / ATCC 35105 / BCRC 15272 / CH1 / DL1 / V288)).